Here is a 251-residue protein sequence, read N- to C-terminus: Hydroxyacylglutathione hydrolase (251 aa).

The Zn(2+) site is built by His-53, His-55, Asp-57, His-58, His-110, Asp-127, and His-165.

This sequence belongs to the metallo-beta-lactamase superfamily. Glyoxalase II family. As to quaternary structure, monomer. Zn(2+) serves as cofactor.

It catalyses the reaction an S-(2-hydroxyacyl)glutathione + H2O = a 2-hydroxy carboxylate + glutathione + H(+). It participates in secondary metabolite metabolism; methylglyoxal degradation; (R)-lactate from methylglyoxal: step 2/2. In terms of biological role, thiolesterase that catalyzes the hydrolysis of S-D-lactoyl-glutathione to form glutathione and D-lactic acid. The polypeptide is Hydroxyacylglutathione hydrolase (Yersinia enterocolitica serotype O:8 / biotype 1B (strain NCTC 13174 / 8081)).